The chain runs to 215 residues: 3-isopropylmalate dehydratase small subunit (215 aa).

Belongs to the LeuD family. LeuD type 1 subfamily. In terms of assembly, heterodimer of LeuC and LeuD.

The catalysed reaction is (2R,3S)-3-isopropylmalate = (2S)-2-isopropylmalate. It functions in the pathway amino-acid biosynthesis; L-leucine biosynthesis; L-leucine from 3-methyl-2-oxobutanoate: step 2/4. Its function is as follows. Catalyzes the isomerization between 2-isopropylmalate and 3-isopropylmalate, via the formation of 2-isopropylmaleate. This chain is 3-isopropylmalate dehydratase small subunit, found in Cellvibrio japonicus (strain Ueda107) (Pseudomonas fluorescens subsp. cellulosa).